Reading from the N-terminus, the 336-residue chain is Phosphate acetyltransferase (336 aa).

This sequence belongs to the phosphate acetyltransferase and butyryltransferase family.

The protein resides in the cytoplasm. The enzyme catalyses acetyl-CoA + phosphate = acetyl phosphate + CoA. Its pathway is metabolic intermediate biosynthesis; acetyl-CoA biosynthesis; acetyl-CoA from acetate: step 2/2. The chain is Phosphate acetyltransferase (pta) from Treponema pallidum (strain Nichols).